We begin with the raw amino-acid sequence, 443 residues long: 3-phosphoshikimate 1-carboxyvinyltransferase (443 aa).

The tract at residues 1–22 (MSHASRPTPLEARGSTPLTGRV) is disordered. 3 residues coordinate 3-phosphoshikimate: lysine 28, serine 29, and arginine 33. Lysine 28 provides a ligand contact to phosphoenolpyruvate. Residues glycine 101 and arginine 129 each contribute to the phosphoenolpyruvate site. Residues serine 174, glutamine 176, aspartate 326, and lysine 353 each contribute to the 3-phosphoshikimate site. Glutamine 176 lines the phosphoenolpyruvate pocket. The active-site Proton acceptor is the aspartate 326. Residues arginine 357 and arginine 400 each contribute to the phosphoenolpyruvate site.

Belongs to the EPSP synthase family. In terms of assembly, monomer.

It localises to the cytoplasm. It carries out the reaction 3-phosphoshikimate + phosphoenolpyruvate = 5-O-(1-carboxyvinyl)-3-phosphoshikimate + phosphate. It functions in the pathway metabolic intermediate biosynthesis; chorismate biosynthesis; chorismate from D-erythrose 4-phosphate and phosphoenolpyruvate: step 6/7. Functionally, catalyzes the transfer of the enolpyruvyl moiety of phosphoenolpyruvate (PEP) to the 5-hydroxyl of shikimate-3-phosphate (S3P) to produce enolpyruvyl shikimate-3-phosphate and inorganic phosphate. The protein is 3-phosphoshikimate 1-carboxyvinyltransferase of Afipia carboxidovorans (strain ATCC 49405 / DSM 1227 / KCTC 32145 / OM5) (Oligotropha carboxidovorans).